Consider the following 428-residue polypeptide: Adenylosuccinate synthetase (428 aa).

Residues 11–17 (GDEGKGK) and 39–41 (GHT) each bind GTP. D12 serves as the catalytic Proton acceptor. Residues D12 and G39 each contribute to the Mg(2+) site. Residues 12 to 15 (DEGK), 37 to 40 (NAGH), T130, R144, N226, T241, and R305 each bind IMP. The active-site Proton donor is H40. 301–307 (VTTGRKR) provides a ligand contact to substrate. GTP contacts are provided by residues R307, 333 to 335 (KLD), and 415 to 417 (GTG).

The protein belongs to the adenylosuccinate synthetase family. Homodimer. Mg(2+) serves as cofactor.

It is found in the cytoplasm. It catalyses the reaction IMP + L-aspartate + GTP = N(6)-(1,2-dicarboxyethyl)-AMP + GDP + phosphate + 2 H(+). The protein operates within purine metabolism; AMP biosynthesis via de novo pathway; AMP from IMP: step 1/2. Its function is as follows. Plays an important role in the de novo pathway and in the salvage pathway of purine nucleotide biosynthesis. Catalyzes the first committed step in the biosynthesis of AMP from IMP. The protein is Adenylosuccinate synthetase of Candida dubliniensis (strain CD36 / ATCC MYA-646 / CBS 7987 / NCPF 3949 / NRRL Y-17841) (Yeast).